Consider the following 530-residue polypeptide: Metal transporter Nramp2 (530 aa).

Residues 1-35 (MENDVKENLEEEEDRLLPPPPPSQSLPSTDSESEA) are disordered. The next 12 membrane-spanning stretches (helical) occupy residues 68-88 (LWLF…PGNL), 96-116 (AIAG…GLLI), 153-173 (LALI…IQIL), 177-197 (FLPL…FLFL), 205-225 (LEAV…WMFG), 251-271 (AVGV…SALV), 297-317 (VALF…AKGF), 339-359 (FGGG…AAGQ), 395-415 (IVPT…LDVL), 418-438 (WLNV…LTLV), 456-476 (IAWT…LDFF), and 484-504 (LFGV…VYLI).

It belongs to the NRAMP (TC 2.A.55) family.

The protein localises to the membrane. In terms of biological role, seems to be involved in iron uptake. The chain is Metal transporter Nramp2 (NRAMP2) from Arabidopsis thaliana (Mouse-ear cress).